A 287-amino-acid chain; its full sequence is MNLWDNMLRGKEATLAGIIRVIIEEEPETQDEIAEKLGISRRYVAKLLKPLIDEKIVRHPYIVDMSKLHKINLEFDEYILMKEIKTTLEKMEKTLLNNLDLVYTALKNSDKKLAEDIIIKDYALNKMEEEVRILLSMNALKYLPGAYANALATIASNLERLGDYIANIAEEVVHGLKLDKDIENEVNMIFTLLKEMLTEAIDVVKSKKKETKIHELEEKLHKNLELLLNKVLENKREDLNFYVQFGMFLKDIERFGDRCVNIVDIALELYHNIPRNPIPERLKRGML.

This is an uncharacterized protein from Methanocaldococcus jannaschii (strain ATCC 43067 / DSM 2661 / JAL-1 / JCM 10045 / NBRC 100440) (Methanococcus jannaschii).